Here is a 648-residue protein sequence, read N- to C-terminus: Beta-glucuronidase (648 aa).

The N-terminal stretch at 1–22 (MSLKWSACWVALGQLLCSCALA) is a signal peptide. N-linked (GlcNAc...) asparagine glycans are attached at residues Asn-172 and Asn-416. The active-site Proton donor is the Glu-447. Asn-627 is a glycosylation site (N-linked (GlcNAc...) asparagine).

It belongs to the glycosyl hydrolase 2 family. Homotetramer.

It is found in the lysosome. Its subcellular location is the endoplasmic reticulum. The enzyme catalyses a beta-D-glucuronoside + H2O = D-glucuronate + an alcohol. With respect to regulation, inhibited by L-aspartic acid. Plays an important role in the degradation of dermatan and keratan sulfates. The sequence is that of Beta-glucuronidase (Gusb) from Mus musculus (Mouse).